The sequence spans 146 residues: D-aminoacyl-tRNA deacylase (146 aa).

Residues 137 to 138 (GP) carry the Gly-cisPro motif, important for rejection of L-amino acids motif.

Belongs to the DTD family. Homodimer.

The protein localises to the cytoplasm. The enzyme catalyses glycyl-tRNA(Ala) + H2O = tRNA(Ala) + glycine + H(+). The catalysed reaction is a D-aminoacyl-tRNA + H2O = a tRNA + a D-alpha-amino acid + H(+). An aminoacyl-tRNA editing enzyme that deacylates mischarged D-aminoacyl-tRNAs. Also deacylates mischarged glycyl-tRNA(Ala), protecting cells against glycine mischarging by AlaRS. Acts via tRNA-based rather than protein-based catalysis; rejects L-amino acids rather than detecting D-amino acids in the active site. By recycling D-aminoacyl-tRNA to D-amino acids and free tRNA molecules, this enzyme counteracts the toxicity associated with the formation of D-aminoacyl-tRNA entities in vivo and helps enforce protein L-homochirality. This chain is D-aminoacyl-tRNA deacylase, found in Bacillus cereus (strain ATCC 14579 / DSM 31 / CCUG 7414 / JCM 2152 / NBRC 15305 / NCIMB 9373 / NCTC 2599 / NRRL B-3711).